The primary structure comprises 1507 residues: Lhr helicase/ probable uracil glycosylase (1507 aa).

Residues 1–856 (MTTNGADPLG…ASLLFGYVGA (856 aa)) are lhr-Core. The ATP site is built by Phe24, Gln31, Lys54, and Thr55. One can recognise a Helicase ATP-binding domain in the interval 35–226 (WSAISEGNNT…FLSGQAPTTI (192 aa)). The ssDNA site is built by Arg122, Arg131, Thr145, Ser148, and Met152. Positions 170 and 171 each coordinate ATP. Residues 170-173 (DEVH) carry the DEAH box motif. SsDNA-binding residues include Ser253, Trp255, and Arg279. In terms of domain architecture, Helicase C-terminal spans 257 to 451 (DVEERIVDLV…VLAQHTVAVA (195 aa)). Residues Ile377, Arg394, and His397 each coordinate ATP. SsDNA-binding residues include Lys410, Gln518, Arg519, Ile528, Trp597, Asp600, and Arg777. The interval 436-529 (PANPLDVLAQ…LAVTSGGAIP (94 aa)) is WH domain. Residues 530-856 (DRGMFTVYLA…ASLLFGYVGA (327 aa)) form a domain 4 region. The segment at 857–1507 (FMYEGDSPLA…SRTPRGLRLR (651 aa)) is CTD.

This sequence belongs to the Lhr helicase family. As to quaternary structure, monomer. Homooligomerizes, possibly a homotetramer. The cofactor is Ca(2+).

The catalysed reaction is Couples ATP hydrolysis with the unwinding of duplex DNA by translocating in the 3'-5' direction.. It catalyses the reaction ATP + H2O = ADP + phosphate + H(+). The enzyme catalyses Hydrolyzes single-stranded DNA or mismatched double-stranded DNA and polynucleotides, releasing free uracil.. In terms of biological role, a 3'-5' helicase involved in repair of at least 3 types of DNA cross-links, mitomycin C (MMC), cisplatin, and psoralen-UVA. Translocates 3'-to-5' on single-stranded (ss)DNA, unwinding any encountered duplex nucleic acid. A 3'-ssDNA loading strand of at least 15 nucleotides is required for helicase activity. An RNA:DNA hybrid with a 3'-ssDNA loading strand is an 8-fold better helicase substrate than 3'-tailed double-stranded (ds)DNA; substrates where the helicase loads on a 3'-ssRNA tail (DNA:RNA and RNA:RNA) are not unwound. Only (d)ATP is hydrolyzed by the protein, which has no ATPase activity in the absence of ssDNA or ssRNA. Arg-279 and Trp-597 are needed to couple ATP hydrolysis to mechanical work; a salt bridge between Arg-280 and Glu-550 closes a clamp around the ssDNA that is not large enough for dsDNA, while Ile-528 wedges between bases of the loading strand. Functionally, excises uracil residues from ssDNA. Uracil residues in DNA can arise as a result of misincorporation of dUMP residues by DNA polymerase or due to deamination of cytosine. The protein is Lhr helicase/ probable uracil glycosylase of Mycolicibacterium smegmatis (strain ATCC 700084 / mc(2)155) (Mycobacterium smegmatis).